The following is a 1302-amino-acid chain: Cingulin-like protein 1 (1302 aa).

The tract at residues 1–554 (MELYFGEYQH…ELTQQTNEET (554 aa)) is head. The ZIM signature appears at 37–51 (AGSYGVSIRVQGIDG). Residues 75 to 104 (PFPPPVINNLPLHSSNGSVPKENSEELQLP) are disordered. A phosphoserine mark is found at Ser-112 and Ser-202. 3 disordered regions span residues 186 to 209 (KKPW…EDPA), 251 to 305 (FTSG…TPTS), and 364 to 392 (PGLQ…VDSA). The span at 195–204 (PSNSQPTSPS) shows a compositional bias: polar residues. Positions 264-282 (AHPETKKTRPDVLPFRRQD) are enriched in basic and acidic residues. Ser-283, Ser-297, and Ser-298 each carry phosphoserine. Residues 296-305 (SSSSSTTPTS) show a composition bias toward low complexity. Residues 366–377 (LQRRGRSGKRNR) show a composition bias toward basic residues. The span at 378–388 (INTDDRKRSRS) shows a compositional bias: basic and acidic residues. Phosphoserine is present on residues Ser-388, Ser-391, and Ser-486. A coiled-coil region spans residues 604-1258 (NSTSEVKDLL…QLNSMKKDLR (655 aa)). The segment covering 655–664 (RSQHNEKVEE) has biased composition (basic and acidic residues). A disordered region spans residues 655 to 675 (RSQHNEKVEENSTLQQRLEES). Ser-708 is modified (phosphoserine). Disordered stretches follow at residues 903–929 (AAQG…SEQK) and 1263–1287 (PSKV…YEAP). The segment covering 917–929 (QLSEKLKEESEQK) has biased composition (basic and acidic residues). A tail region spans residues 1263-1302 (PSKVLDDMDDDDDLSTDGGSLYEAPVSYTFSKDSTVASQI).

Belongs to the cingulin family. In terms of assembly, homodimer or oligomer. Interacts with CD2AP and SH3BP1; probably part of a complex at cell junctions. As to expression, smooth muscle, spleen, testis, fetal brain, amygdala, corpus callosum, cerebellum, thalamus and subthalamic nucleus of adult brain.

Its subcellular location is the cell junction. The protein localises to the tight junction. May be involved in anchoring the apical junctional complex, especially tight junctions, to actin-based cytoskeletons. The protein is Cingulin-like protein 1 (CGNL1) of Homo sapiens (Human).